Reading from the N-terminus, the 147-residue chain is MKILLIKDVKSLGKAGEVKEVKDGYANNFLIAKGFAKAATTEVLRRYESQKQKEAEDERYEIESLKTLSNTLKGVRVKIAKQVGSNNALFGSVTKDDVANALKEQKNIEIDKKLIELPQTKTIGIYDVNLKLKFGVTAKFEIEVVGE.

This sequence belongs to the bacterial ribosomal protein bL9 family.

In terms of biological role, binds to the 23S rRNA. This chain is Large ribosomal subunit protein bL9, found in Campylobacter hominis (strain ATCC BAA-381 / DSM 21671 / CCUG 45161 / LMG 19568 / NCTC 13146 / CH001A).